Reading from the N-terminus, the 492-residue chain is Catalase-1 (492 aa).

Residues H65 and N138 contribute to the active site. Y348 serves as a coordination point for heme.

Belongs to the catalase family. In terms of assembly, homotetramer and heterotetramer. At least six or seven isozymes are produced from a mixture of 3 gene products. Interacts with NCA1. Interacts with LSD1. The cofactor is heme.

The protein resides in the cytoplasm. It catalyses the reaction 2 H2O2 = O2 + 2 H2O. Occurs in almost all aerobically respiring organisms and serves to protect cells from the toxic effects of hydrogen peroxide. In Arabidopsis thaliana (Mouse-ear cress), this protein is Catalase-1 (CAT1).